A 184-amino-acid polypeptide reads, in one-letter code: Probable RNA 2'-phosphotransferase (184 aa).

The protein belongs to the KptA/TPT1 family.

Removes the 2'-phosphate from RNA via an intermediate in which the phosphate is ADP-ribosylated by NAD followed by a presumed transesterification to release the RNA and generate ADP-ribose 1''-2''-cyclic phosphate (APPR&gt;P). May function as an ADP-ribosylase. The protein is Probable RNA 2'-phosphotransferase of Escherichia coli O6:K15:H31 (strain 536 / UPEC).